We begin with the raw amino-acid sequence, 167 residues long: Centrin-3 (167 aa).

4 EF-hand domains span residues E25–D60, V61–E96, D98–N133, and M134–I167. Ca(2+) is bound by residues D38, D40, D42, and E49. Position 135 is a phosphoserine (S135). Positions 147, 149, 151, 153, and 158 each coordinate Ca(2+).

Belongs to the centrin family. Monomer. Component of the TREX-2 complex (transcription and export complex 2), composed of at least ENY2, GANP, PCID2, SEM1, and either centrin CETN2 or CETN3. Interacts with USP49.

The protein localises to the cytoplasm. It localises to the cytoskeleton. The protein resides in the microtubule organizing center. Its subcellular location is the centrosome. It is found in the nucleus. The protein localises to the nucleolus. It localises to the nucleus envelope. The protein resides in the nuclear pore complex. Its subcellular location is the centriole. Its function is as follows. Plays a fundamental role in microtubule-organizing center structure and function. In terms of biological role, as a component of the TREX-2 complex, involved in the export of mRNAs to the cytoplasm through the nuclear pores. The chain is Centrin-3 (Cetn3) from Mus musculus (Mouse).